The primary structure comprises 504 residues: L-carnitine/gamma-butyrobetaine antiporter (504 aa).

Helical transmembrane passes span 10 to 30 (IEPKVFFPPLIIVGILCWLTV), 51 to 71 (WGWAFEWYMVVMLFGWFWLVF), 92 to 112 (IFMMFASCTSAAVLFWGSIEI), 143 to 163 (GPLPWATYSFLSVAFAYFFFV), 195 to 215 (FYLVALIFAMGTSLGLATPLV), 231 to 251 (LDAIIITCWIILNAICVACGL), 263 to 283 (SYLSFLMLGWVFIVSGASFIM), 316 to 336 (WTVFYWAWWVIYAIQMSIFLA), 347 to 367 (LCFGMVLGLTASTWILWTVLG), 398 to 418 (WAALPLSTATIWGFFILCFIA), 446 to 466 (LLVRIGWSILVGIIGIVLLAL), and 475 to 495 (AIIAGGCPLFFVNIMVTLSFI).

The protein belongs to the BCCT transporter (TC 2.A.15) family. CaiT subfamily. Homotrimer.

It is found in the cell inner membrane. It carries out the reaction 4-(trimethylamino)butanoate(in) + (R)-carnitine(out) = 4-(trimethylamino)butanoate(out) + (R)-carnitine(in). Its pathway is amine and polyamine metabolism; carnitine metabolism. Its function is as follows. Catalyzes the exchange of L-carnitine for gamma-butyrobetaine. The polypeptide is L-carnitine/gamma-butyrobetaine antiporter (Escherichia coli O8 (strain IAI1)).